The chain runs to 247 residues: Chromosome partition protein MukE (247 aa).

The disordered stretch occupies residues 213-247 (AQSLQEEKNGLKDNMDQSAVENEQYFENEENEGIA). Residues 217-227 (QEEKNGLKDNM) show a composition bias toward basic and acidic residues. Acidic residues predominate over residues 236–247 (QYFENEENEGIA).

This sequence belongs to the MukE family. As to quaternary structure, interacts, and probably forms a ternary complex, with MukF and MukB. The complex formation is stimulated by calcium or magnesium.

It is found in the cytoplasm. It localises to the nucleoid. Functionally, involved in chromosome condensation, segregation and cell cycle progression. May participate in facilitating chromosome segregation by condensation DNA from both sides of a centrally located replisome during cell division. Probably acts via its interaction with MukB and MukF. In Histophilus somni (strain 2336) (Haemophilus somnus), this protein is Chromosome partition protein MukE.